The chain runs to 193 residues: MAYSWDNRVKYVVRYMYDIDNNGYLDKNDFECLALRNTLIEGRGEFNSDAYANNQKIMSNLWNEIAELADFNKDGQVTVDEFKQAVQNLCCGKSFDGFPPCFKTVIGRLFKTIDINGDGLAGVDEYRLDCISRSAFSSVKEIDDAYAKLCTDDDKKAGGISLNRYQELYAQFISNPDEKCNAVYLFGPLKEVQ.

EF-hand domains lie at 16–40 (MYDI…NTLI), 57–92 (IMSN…LCCG), and 101–136 (CFKT…RSAF). Ca(2+) is bound by residues D18, D20, N22, Y24, D29, D70, N72, D74, Q76, E81, D114, N116, D118, and E125.

Monomer and dimer. Skeletal muscle (at protein level).

Its function is as follows. Like parvalbumins, SCPs seem to be more abundant in fast contracting muscles, but no functional relationship can be established from this distribution. The sequence is that of Sarcoplasmic calcium-binding protein from Scylla paramamosain (Mud crab).